Here is a 1339-residue protein sequence, read N- to C-terminus: DNA-directed RNA polymerase subunit beta'' (1339 aa).

Residues cysteine 226, cysteine 299, cysteine 306, and cysteine 309 each contribute to the Zn(2+) site.

Belongs to the RNA polymerase beta' chain family. RpoC2 subfamily. As to quaternary structure, in plastids the minimal PEP RNA polymerase catalytic core is composed of four subunits: alpha, beta, beta', and beta''. When a (nuclear-encoded) sigma factor is associated with the core the holoenzyme is formed, which can initiate transcription. Requires Zn(2+) as cofactor.

The protein localises to the plastid. It is found in the chloroplast. It carries out the reaction RNA(n) + a ribonucleoside 5'-triphosphate = RNA(n+1) + diphosphate. Its function is as follows. DNA-dependent RNA polymerase catalyzes the transcription of DNA into RNA using the four ribonucleoside triphosphates as substrates. The protein is DNA-directed RNA polymerase subunit beta'' of Cycas taitungensis (Prince sago).